Consider the following 297-residue polypeptide: UTP--glucose-1-phosphate uridylyltransferase YngB (297 aa).

The signal sequence occupies residues 1–27 (MRKKVRKAVIPAAGLGTRFLPATKAQP).

This sequence belongs to the UDPGP type 2 family. Homodimer.

The catalysed reaction is alpha-D-glucose 1-phosphate + UTP + H(+) = UDP-alpha-D-glucose + diphosphate. The protein operates within glycolipid metabolism; diglucosyl-diacylglycerol biosynthesis. In terms of biological role, catalyzes the formation of UDP-glucose from glucose-1-phosphate and UTP. This is an intermediate step in the biosynthesis of diglucosyl-diacylglycerol (Glc2-DAG), i.e. the predominant glycolipid found in B.subtilis membrane, which is also used as a membrane anchor for lipoteichoic acid (LTA). YngB contributes to wall teichoic acid (WTA) glucosylation and glycolipid formation under anaerobic fermentative growth conditions. Might also enter other glycosylation pathways, leading to the decorating of other cell envelope components with glucose residues under anaerobic or other growth conditions. In Bacillus subtilis (strain 168), this protein is UTP--glucose-1-phosphate uridylyltransferase YngB (yngB).